A 422-amino-acid polypeptide reads, in one-letter code: Tyrosine--tRNA ligase 1 (422 aa).

Position 36 (tyrosine 36) interacts with L-tyrosine. A 'HIGH' region motif is present at residues 41-50 (PTAGSLHIGH). The L-tyrosine site is built by tyrosine 173 and glutamine 177. The 'KMSKS' region signature appears at 233–237 (KFGKT). Residue lysine 236 participates in ATP binding. One can recognise an S4 RNA-binding domain in the interval 355 to 419 (SDVVTLLLET…GKKQFAMVKL (65 aa)).

Belongs to the class-I aminoacyl-tRNA synthetase family. TyrS type 1 subfamily. In terms of assembly, homodimer.

The protein resides in the cytoplasm. The enzyme catalyses tRNA(Tyr) + L-tyrosine + ATP = L-tyrosyl-tRNA(Tyr) + AMP + diphosphate + H(+). Functionally, catalyzes the attachment of tyrosine to tRNA(Tyr) in a two-step reaction: tyrosine is first activated by ATP to form Tyr-AMP and then transferred to the acceptor end of tRNA(Tyr). This chain is Tyrosine--tRNA ligase 1, found in Vibrio vulnificus (strain CMCP6).